We begin with the raw amino-acid sequence, 64 residues long: Large ribosomal subunit protein bL35 (64 aa).

Residues 1-44 form a disordered region; it reads MPKLKTNRGAAKRFKVKASGRISRARSNHSHILTKKDPKRKRRL. The segment covering 10-44 has biased composition (basic residues); sequence AAKRFKVKASGRISRARSNHSHILTKKDPKRKRRL.

It belongs to the bacterial ribosomal protein bL35 family.

In Halorhodospira halophila (strain DSM 244 / SL1) (Ectothiorhodospira halophila (strain DSM 244 / SL1)), this protein is Large ribosomal subunit protein bL35.